The chain runs to 1036 residues: uncharacterized protein (1036 aa).

The next 2 helical transmembrane spans lie at 4–24 (YLFIPLLVSFLFPVALANASL) and 1004–1024 (ILWVIFGIIISLMISSAVLFL).

Belongs to the MG414/MG415 family.

Its subcellular location is the cell membrane. This is an uncharacterized protein from Mycoplasma genitalium (strain ATCC 33530 / DSM 19775 / NCTC 10195 / G37) (Mycoplasmoides genitalium).